Consider the following 518-residue polypeptide: Glucose-1-phosphate adenylyltransferase large subunit 2, cytosolic (518 aa).

The protein belongs to the bacterial/plant glucose-1-phosphate adenylyltransferase family. As to quaternary structure, heterotetramer composed of two small and two large subunits.

It is found in the cytoplasm. Its subcellular location is the cytosol. The catalysed reaction is alpha-D-glucose 1-phosphate + ATP + H(+) = ADP-alpha-D-glucose + diphosphate. Its pathway is glycan biosynthesis; starch biosynthesis. Activated by 3'phosphoglycerate, inhibited by orthophosphate. Allosteric regulation. Inhibited by inorganic phosphate (Pi). Its function is as follows. Involved in synthesis of starch. Catalyzes the synthesis of ADP-glucose, a molecule that serves as an activated glycosyl donor for alpha-1,4-glucan synthesis. Essential for starch synthesis in seed endosperm. Is essential for both catalytic and allosteric regulatory properties of the cytosolic heterotetramer enzyme. The sequence is that of Glucose-1-phosphate adenylyltransferase large subunit 2, cytosolic from Oryza sativa subsp. japonica (Rice).